Here is a 177-residue protein sequence, read N- to C-terminus: Endoribonuclease YbeY (177 aa).

Positions 118, 122, and 128 each coordinate Zn(2+).

Belongs to the endoribonuclease YbeY family. It depends on Zn(2+) as a cofactor.

The protein resides in the cytoplasm. Single strand-specific metallo-endoribonuclease involved in late-stage 70S ribosome quality control and in maturation of the 3' terminus of the 16S rRNA. The polypeptide is Endoribonuclease YbeY (Mycobacterium sp. (strain JLS)).